A 943-amino-acid chain; its full sequence is MELAKAFEPADIERRWYPEWETQNYFAAGVDASKADNFCILLPPPNVTGTLHMGHGFNQTIMDALTRYYRMRGHNTLWQPGTDHAGIATQIVVERQLDAQGISRHDLGREKFLEKVWEWKEYSGNTITKQMRRMGTSPDWKRERFTMDAGLNKVVTETFVRLFNEGLIYRGKRLVNWDPKLNTAVSDLEVVQEEEDGFMWHIRYPLADGSDSLVVATTRPETMLGDTAVMVHPEDERYKHMIGQMVKLPLTDREIPIIADSYVDLEFGTGCVKVTPAHDFNDYAVGQRHGLPMISILTLDAKVNENAPEKYRGLDRFDARKAVVADLEALGILEKTDKHKLKVPRGDRTNVVIEPMLTDQWFVAMSKPGDDGKSITEKALDVVHSGEIKFYPENWVNTYNQWLNNIQDWCISRQLWWGHQIPAWYGDNGQIFVAHSEAEAKAEAAKQGYTGTLKRDEDVLDTWFSSALWPFSTLDWTGDEAIDAANPLLKQYLPSSVLVTGFDIIFFWVARMVMMTKQITGQIPFKHVYVHGLIRDGEGQKMSKSKGNVLDPIDLIDGIGLEALIEKRTTGLMNPKQAESIAKKTKKEFPEGIASFGTDALRFTFASLASPGRDIKFDLNRCDGYRNFCNKLWNATRFVLMNVEGHDLALEHQQNGPACGGSAPLEFSFADRWIVSQLQRVEQEVEQHFTDYRFDLIAQAIYKFIWDEFCDWYLEIAKVEIQTGNDAQQRGARRTLVRTLEAVLRLAHPLIPFITEELWQTVAPIAGRKTHDSIMLAAYPRAEEYKIDAASEAKVERLKALAYACRNLRGEMNVSPALRMPLLVAGGGAEISEFAAILQALGKLSEVQIVDDMPADAMAPVAVVGETRLMLKVEIDVAAERIRLAKEIEKLEKQISIAQGKLANEGFVARAPAAVIDQEKQRVADFTATLEQLKPQLAKLGQA.

The short motif at 45–55 is the 'HIGH' region element; the sequence is PNVTGTLHMGH. Positions 541-545 match the 'KMSKS' region motif; sequence KMSKS. ATP is bound at residue lysine 544. Positions 875–934 form a coiled coil; that stretch reads IDVAAERIRLAKEIEKLEKQISIAQGKLANEGFVARAPAAVIDQEKQRVADFTATLEQLK.

It belongs to the class-I aminoacyl-tRNA synthetase family. ValS type 1 subfamily. In terms of assembly, monomer.

Its subcellular location is the cytoplasm. The enzyme catalyses tRNA(Val) + L-valine + ATP = L-valyl-tRNA(Val) + AMP + diphosphate. Functionally, catalyzes the attachment of valine to tRNA(Val). As ValRS can inadvertently accommodate and process structurally similar amino acids such as threonine, to avoid such errors, it has a 'posttransfer' editing activity that hydrolyzes mischarged Thr-tRNA(Val) in a tRNA-dependent manner. This chain is Valine--tRNA ligase, found in Dechloromonas aromatica (strain RCB).